A 1083-amino-acid chain; its full sequence is DNA primase (1083 aa).

The CHC2-type zinc-finger motif lies at 1022-1061; sequence CLRYPHRGGRTAPRTFVSLRVDHHNRLCISLAQQCFATKC.

Belongs to the herpesviridae DNA primase family. Associates with the helicase and the primase-associated factor to form the helicase-primase factor.

The protein resides in the host nucleus. Functionally, essential component of the helicase/primase complex. Unwinds the DNA at the replication forks and generates single-stranded DNA for both leading and lagging strand synthesis. The primase initiates primer synthesis and thereby produces large amount of short RNA primers on the lagging strand that the polymerase elongates using dNTPs. This chain is DNA primase, found in Homo sapiens (Human).